Reading from the N-terminus, the 221-residue chain is ATP synthase subunit a 1 (221 aa).

Transmembrane regions (helical) follow at residues Leu20 to Thr40, Tyr78 to Ile98, Leu108 to Ala128, Met174 to Leu194, and Leu196 to Ala216.

It belongs to the ATPase A chain family. F-type ATPases have 2 components, CF(1) - the catalytic core - and CF(0) - the membrane proton channel. CF(1) has five subunits: alpha(3), beta(3), gamma(1), delta(1), epsilon(1). CF(0) has four main subunits: a, b, b' and c.

The protein resides in the cell inner membrane. In terms of biological role, key component of the proton channel; it plays a direct role in the translocation of protons across the membrane. The polypeptide is ATP synthase subunit a 1 (Chlorobaculum tepidum (strain ATCC 49652 / DSM 12025 / NBRC 103806 / TLS) (Chlorobium tepidum)).